The primary structure comprises 264 residues: 1H-3-hydroxy-4-oxoquinoline 2,4-dioxygenase (264 aa).

Substrate is bound by residues 30–32 (WCQ), 94–95 (TS), and W153. The active-site Proton donor/acceptor is H244.

This sequence belongs to the AB hydrolase superfamily. None. Contrary to most other dioxygenases, this enzyme does not require a cofactor for catalysis. serves as cofactor.

It catalyses the reaction 3-hydroxy-1H-quinolin-4-one + O2 = N-formylanthranilate + CO + H(+). Its function is as follows. Ring-cleaving dioxygenase involved in oxoquinoline degradation and utilization. The sequence is that of 1H-3-hydroxy-4-oxoquinoline 2,4-dioxygenase (qdo) from Pseudomonas putida (Arthrobacter siderocapsulatus).